Here is a 407-residue protein sequence, read N- to C-terminus: MALSKISPTEGSRRILEDHHIDEDVGFALPHPLVELPDAYSPWVLVARNLPVLIENGQLREEVEKLPTLSTDGLRGHRLQRLAHLALGYITMAYVWNRGDDDVRKVLPRNIAVPYCELSEKLGLPPILSYADCVLANWKKKDPNGPMTYENMDILFSFPGGDCDKGFFLVSLLVEIAASPAIKAIPTVSSAVERQDLKALEKALHDIATSLEKAKEIFKRMRDFVDPDTFFHVLRIYLSGWKCSSKLPEGLLYEGVWDTPKMFSGGSAGQSSIFQSLDVLLGIKHEAGKESPAEFLQEMREYMPPAHRNFLFFLESAPPVREFVISRHNEDLTKAYNECVNGLVSVRKFHLAIVDTYIMKPSKKKPTDGDKSEEPSNVESRGTGGTNPMTFLRSVKDTTEKALLSWP.

A heme b-binding site is contributed by histidine 350. The interval serine 362–proline 407 is disordered. Over residues lysine 365–glutamate 374 the composition is skewed to basic and acidic residues.

The protein belongs to the indoleamine 2,3-dioxygenase family. As to quaternary structure, monomer. Requires heme b as cofactor. Highly expressed in epididymis, duodemum, jejunum, ileum, colon and spleen. Highly expressed in epididymis, prostate, duodemum, jejunum, ileum, colon and spleen, not detected in the liver (at protein level). Expressed in tumors only upon exposure to IFN gamma. Constitutively expressed in placenta in trophoblast cells. Expression is restricted to perinuclear regions of primary trophoblast giant cells (TGCs) of fetal origin at mid-gestation (10.5 dpc). After placentation (14 dpc), no IDO expression was detected at the maternal-fetal interface.

Its subcellular location is the cytoplasm. It localises to the cytosol. The catalysed reaction is D-tryptophan + O2 = N-formyl-D-kynurenine. It carries out the reaction L-tryptophan + O2 = N-formyl-L-kynurenine. Its activity is regulated as follows. Activity is inhibited by and MTH-trp (methylthiohydantoin-DL-tryptophan), modestly inhibited by L-1MT (1-methyl-L-tryptophan) but not D-1MT (1-methyl-D-tryptophan). Functionally, catalyzes the first and rate limiting step of the catabolism of the essential amino acid tryptophan along the kynurenine pathway. Involved in the peripheral immune tolerance, contributing to maintain homeostasis by preventing autoimmunity or immunopathology that would result from uncontrolled and overreacting immune responses. Tryptophan shortage inhibits T lymphocytes division and accumulation of tryptophan catabolites induces T-cell apoptosis and differentiation of regulatory T-cells. Acts as a suppressor of anti-tumor immunity. Limits the growth of intracellular pathogens by depriving tryptophan. Protects the fetus from maternal immune rejection. In Mus musculus (Mouse), this protein is Indoleamine 2,3-dioxygenase 1.